Reading from the N-terminus, the 278-residue chain is HTH-type transcriptional regulator HdfR (278 aa).

One can recognise an HTH lysR-type domain in the interval 1–58; that stretch reads MDTELLKTFLEVSRTRHFGRAAEALYLTQSAVSFRIRQLENQLGVNLFTRHRNNIRLT. Residues 18 to 37 constitute a DNA-binding region (H-T-H motif); that stretch reads FGRAAEALYLTQSAVSFRIR.

This sequence belongs to the LysR transcriptional regulatory family.

Negatively regulates the transcription of the flagellar master operon flhDC by binding to the upstream region of the operon. This chain is HTH-type transcriptional regulator HdfR, found in Salmonella dublin (strain CT_02021853).